Consider the following 298-residue polypeptide: UDP-3-O-acyl-N-acetylglucosamine deacetylase (298 aa).

Zn(2+) contacts are provided by H75, H232, and D236. The active-site Proton donor is H259.

The protein belongs to the LpxC family. It depends on Zn(2+) as a cofactor.

It catalyses the reaction a UDP-3-O-[(3R)-3-hydroxyacyl]-N-acetyl-alpha-D-glucosamine + H2O = a UDP-3-O-[(3R)-3-hydroxyacyl]-alpha-D-glucosamine + acetate. Its pathway is glycolipid biosynthesis; lipid IV(A) biosynthesis; lipid IV(A) from (3R)-3-hydroxytetradecanoyl-[acyl-carrier-protein] and UDP-N-acetyl-alpha-D-glucosamine: step 2/6. Catalyzes the hydrolysis of UDP-3-O-myristoyl-N-acetylglucosamine to form UDP-3-O-myristoylglucosamine and acetate, the committed step in lipid A biosynthesis. This chain is UDP-3-O-acyl-N-acetylglucosamine deacetylase, found in Wolinella succinogenes (strain ATCC 29543 / DSM 1740 / CCUG 13145 / JCM 31913 / LMG 7466 / NCTC 11488 / FDC 602W) (Vibrio succinogenes).